Consider the following 229-residue polypeptide: Orotidine 5'-phosphate decarboxylase (229 aa).

Substrate-binding positions include D10, K32, 59 to 68 (DLKFHDIPNT), T119, R180, Q189, G209, and R210. The Proton donor role is filled by K61.

Belongs to the OMP decarboxylase family. Type 1 subfamily. As to quaternary structure, homodimer.

It catalyses the reaction orotidine 5'-phosphate + H(+) = UMP + CO2. It participates in pyrimidine metabolism; UMP biosynthesis via de novo pathway; UMP from orotate: step 2/2. Functionally, catalyzes the decarboxylation of orotidine 5'-monophosphate (OMP) to uridine 5'-monophosphate (UMP). The polypeptide is Orotidine 5'-phosphate decarboxylase (Legionella pneumophila subsp. pneumophila (strain Philadelphia 1 / ATCC 33152 / DSM 7513)).